Here is a 68-residue protein sequence, read N- to C-terminus: Cx9C motif-containing protein 4 (68 aa).

Positions Lys4–Arg46 constitute a CHCH domain. 2 short sequence motifs (cx9C motif) span residues Cys7–Cys17 and Cys28–Cys38. Disulfide bonds link Cys7–Cys38, Cys17–Cys28, and Cys39–Cys50.

This sequence belongs to the CMC4 family. Expressed in many tissues with a relatively high level in skeletal muscle.

It localises to the mitochondrion. The polypeptide is Cx9C motif-containing protein 4 (CMC4) (Homo sapiens (Human)).